A 513-amino-acid chain; its full sequence is ATP synthase subunit alpha (513 aa).

G169 to T176 provides a ligand contact to ATP.

It belongs to the ATPase alpha/beta chains family. F-type ATPases have 2 components, CF(1) - the catalytic core - and CF(0) - the membrane proton channel. CF(1) has five subunits: alpha(3), beta(3), gamma(1), delta(1), epsilon(1). CF(0) has three main subunits: a(1), b(2) and c(9-12). The alpha and beta chains form an alternating ring which encloses part of the gamma chain. CF(1) is attached to CF(0) by a central stalk formed by the gamma and epsilon chains, while a peripheral stalk is formed by the delta and b chains.

It is found in the cell inner membrane. The enzyme catalyses ATP + H2O + 4 H(+)(in) = ADP + phosphate + 5 H(+)(out). Produces ATP from ADP in the presence of a proton gradient across the membrane. The alpha chain is a regulatory subunit. In Shewanella sp. (strain ANA-3), this protein is ATP synthase subunit alpha.